The primary structure comprises 464 residues: UPF0210 protein Cgl1545/cg1743 (464 aa).

Belongs to the UPF0210 family. Homodimer.

In Corynebacterium glutamicum (strain ATCC 13032 / DSM 20300 / JCM 1318 / BCRC 11384 / CCUG 27702 / LMG 3730 / NBRC 12168 / NCIMB 10025 / NRRL B-2784 / 534), this protein is UPF0210 protein Cgl1545/cg1743.